A 428-amino-acid chain; its full sequence is Enolase 1 (428 aa).

Position 167 (Gln167) interacts with (2R)-2-phosphoglycerate. Catalysis depends on Glu209, which acts as the Proton donor. Mg(2+) contacts are provided by Asp246, Glu288, and Asp315. The (2R)-2-phosphoglycerate site is built by Lys340, Arg369, Ser370, and Lys391. Lys340 (proton acceptor) is an active-site residue.

The protein belongs to the enolase family. In terms of assembly, component of the RNA degradosome, a multiprotein complex involved in RNA processing and mRNA degradation. Requires Mg(2+) as cofactor.

It localises to the cytoplasm. The protein localises to the secreted. The protein resides in the cell surface. The enzyme catalyses (2R)-2-phosphoglycerate = phosphoenolpyruvate + H2O. It functions in the pathway carbohydrate degradation; glycolysis; pyruvate from D-glyceraldehyde 3-phosphate: step 4/5. Functionally, catalyzes the reversible conversion of 2-phosphoglycerate (2-PG) into phosphoenolpyruvate (PEP). It is essential for the degradation of carbohydrates via glycolysis. The polypeptide is Enolase 1 (Pseudomonas syringae pv. tomato (strain ATCC BAA-871 / DC3000)).